The following is a 332-amino-acid chain: L-lactate dehydrogenase A-like 6A (332 aa).

Residue Ala-2 is modified to N-acetylalanine. Residues Lys-5 and Lys-57 each carry the N6-acetyllysine; alternate modification. N6-succinyllysine; alternate is present on Lys-5. Position 29-57 (29-57 (GSVGVACAISILLKGLSDELVLVDVDEGK)) interacts with NAD(+). A Glycyl lysine isopeptide (Lys-Gly) (interchain with G-Cter in SUMO2); alternate cross-link involves residue Lys-57. Lys-81 carries the post-translational modification N6-acetyllysine. Arg-99 lines the NAD(+) pocket. Arg-106 provides a ligand contact to substrate. The residue at position 118 (Lys-118) is an N6-acetyllysine; alternate. At Lys-118 the chain carries N6-succinyllysine; alternate. Asn-138 serves as a coordination point for NAD(+). Substrate-binding residues include Asn-138 and Arg-169. The active-site Proton acceptor is His-193. The residue at position 232 (Lys-232) is an N6-acetyllysine. Phosphotyrosine is present on Tyr-239. Residue Lys-243 is modified to N6-acetyllysine. Substrate is bound at residue Thr-248. Residue Thr-309 is modified to Phosphothreonine. The residue at position 318 (Lys-318) is an N6-acetyllysine; alternate. The residue at position 318 (Lys-318) is an N6-succinyllysine; alternate. Position 322 is a phosphothreonine (Thr-322).

The protein belongs to the LDH/MDH superfamily. LDH family. As to expression, testis-specific.

The protein localises to the cytoplasm. The catalysed reaction is (S)-lactate + NAD(+) = pyruvate + NADH + H(+). The protein operates within fermentation; pyruvate fermentation to lactate; (S)-lactate from pyruvate: step 1/1. Its function is as follows. Catalyzes the interconversion of L-lactate and pyruvate with nicotinamide adenine dinucleotide NAD(+) as a coenzyme. Significantly increases the transcriptional activity of JUN, when overexpressed. The chain is L-lactate dehydrogenase A-like 6A (LDHAL6A) from Homo sapiens (Human).